The primary structure comprises 132 residues: uncharacterized protein (132 aa).

The 69-residue stretch at 1–69 folds into the HTH merR-type domain; it reads MNIGEAAKKS…LDEVGKLLTL (69 aa). Positions 4-23 form a DNA-binding region, H-T-H motif; the sequence is GEAAKKSGLTPKMIRYYESI.

The protein resides in the cytoplasm. This is an uncharacterized protein from Pseudomonas aeruginosa (strain ATCC 15692 / DSM 22644 / CIP 104116 / JCM 14847 / LMG 12228 / 1C / PRS 101 / PAO1).